A 230-amino-acid polypeptide reads, in one-letter code: Small ribosomal subunit protein uS3 (230 aa).

The KH type-2 domain occupies 39–107 (VRKFLVEKLQ…PAQINIAEIR (69 aa)).

It belongs to the universal ribosomal protein uS3 family. As to quaternary structure, part of the 30S ribosomal subunit. Forms a tight complex with proteins S10 and S14.

Functionally, binds the lower part of the 30S subunit head. Binds mRNA in the 70S ribosome, positioning it for translation. This chain is Small ribosomal subunit protein uS3, found in Shewanella putrefaciens (strain CN-32 / ATCC BAA-453).